The chain runs to 335 residues: V-set and immunoglobulin domain-containing protein 1 (335 aa).

The N-terminal stretch at 1-21 (MFPTMLKIFPILATLAGHVHG) is a signal peptide. Residues 22 to 136 (VVVTVPEKTV…SQKSVIVNVL (115 aa)) enclose the Ig-like V-type domain. The Extracellular portion of the chain corresponds to 22 to 233 (VVVTVPEKTV…DLTSMHSDGN (212 aa)). 2 disulfides stabilise this stretch: Cys43-Cys115 and Cys160-Cys210. In terms of domain architecture, Ig-like C2-type spans 139–226 (PSKPFCKIEG…GNSTCELDLT (88 aa)). The chain crosses the membrane as a helical span at residues 234–254 (IVAGALIGAILAAVIICAIVW). Residues 255–335 (VLTKKAKKKK…QKEETAGSSF (81 aa)) are Cytoplasmic-facing. The segment at 266–335 (SSNEMQVMAQ…QKEETAGSSF (70 aa)) is disordered. Over residues 268-306 (NEMQVMAQKQSNAEYAQVPNEENTPATAVLPSNATNEQP) the composition is skewed to polar residues. The segment covering 319–335 (NDEKHEVQKEETAGSSF) has biased composition (basic and acidic residues).

In terms of tissue distribution, expressed in thymocytes.

It is found in the membrane. This Gallus gallus (Chicken) protein is V-set and immunoglobulin domain-containing protein 1 (VSIG1).